Consider the following 692-residue polypeptide: Putative receptor-like protein kinase At1g80870 (692 aa).

The helical transmembrane segment at 20-40 (LFLILTISSSLVIFFAILYFI) threads the bilayer. Residues 81-673 (FDESNVIGKG…GEMDISSTAF (593 aa)) enclose the Protein kinase domain. Residues 87–95 (IGKGGSGTV) and Lys-109 contribute to the ATP site. Catalysis depends on Asp-206, which acts as the Proton acceptor. Disordered regions lie at residues 427-446 (EISERKNKRSKNKKKKHRNM) and 511-533 (RRKSNSSSKKKKKNNNGSMGSEM). 2 stretches are compositionally biased toward basic residues: residues 432–444 (KNKRSKNKKKKHR) and 511–524 (RRKSNSSSKKKKKN).

The protein belongs to the protein kinase superfamily. Ser/Thr protein kinase family.

The protein localises to the cell membrane. The catalysed reaction is L-seryl-[protein] + ATP = O-phospho-L-seryl-[protein] + ADP + H(+). It catalyses the reaction L-threonyl-[protein] + ATP = O-phospho-L-threonyl-[protein] + ADP + H(+). The protein is Putative receptor-like protein kinase At1g80870 of Arabidopsis thaliana (Mouse-ear cress).